Here is a 107-residue protein sequence, read N- to C-terminus: MKDFYYETMYILRADLTEEQVEQAIAKYQTLLTEAGAEVQDTQHRGKRRLAYLINKQREGIYVQINYTGDGSQIAPLERALRLSEEVLRFLTVKQEVRPPAPVAVEA.

Belongs to the bacterial ribosomal protein bS6 family.

Binds together with bS18 to 16S ribosomal RNA. The polypeptide is Small ribosomal subunit protein bS6 (Synechococcus elongatus (strain ATCC 33912 / PCC 7942 / FACHB-805) (Anacystis nidulans R2)).